The following is a 562-amino-acid chain: Bifunctional coenzyme A synthase (562 aa).

2 positions are modified to phosphoserine: serine 177 and serine 182. Positions 179–357 (VARSAKQPVR…HKRPELPPGC (179 aa)) are phosphopantetheine adenylyltransferase. The DPCK domain occupies 359 to 562 (VIGLTGISGS…KRISEAPSDP (204 aa)). Residue 364 to 371 (GISGSGKS) coordinates ATP.

In the central section; belongs to the eukaryotic CoaD family. As to quaternary structure, monomer. In terms of processing, the N-terminus is blocked.

The protein localises to the cytoplasm. The protein resides in the mitochondrion matrix. The enzyme catalyses (R)-4'-phosphopantetheine + ATP + H(+) = 3'-dephospho-CoA + diphosphate. It carries out the reaction 3'-dephospho-CoA + ATP = ADP + CoA + H(+). It participates in cofactor biosynthesis; coenzyme A biosynthesis; CoA from (R)-pantothenate: step 4/5. Its pathway is cofactor biosynthesis; coenzyme A biosynthesis; CoA from (R)-pantothenate: step 5/5. Bifunctional enzyme that catalyzes the fourth and fifth sequential steps of CoA biosynthetic pathway. The fourth reaction is catalyzed by the phosphopantetheine adenylyltransferase, coded by the coaD domain; the fifth reaction is catalyzed by the dephospho-CoA kinase, coded by the coaE domain. May act as a point of CoA biosynthesis regulation. The polypeptide is Bifunctional coenzyme A synthase (Sus scrofa (Pig)).